Reading from the N-terminus, the 271-residue chain is 4-diphosphocytidyl-2-C-methyl-D-erythritol kinase (271 aa).

K17 is a catalytic residue. Residue 97–107 coordinates ATP; the sequence is PVGSGLGGGSS. D137 is a catalytic residue.

The protein belongs to the GHMP kinase family. IspE subfamily.

The catalysed reaction is 4-CDP-2-C-methyl-D-erythritol + ATP = 4-CDP-2-C-methyl-D-erythritol 2-phosphate + ADP + H(+). It participates in isoprenoid biosynthesis; isopentenyl diphosphate biosynthesis via DXP pathway; isopentenyl diphosphate from 1-deoxy-D-xylulose 5-phosphate: step 3/6. Functionally, catalyzes the phosphorylation of the position 2 hydroxy group of 4-diphosphocytidyl-2C-methyl-D-erythritol. The polypeptide is 4-diphosphocytidyl-2-C-methyl-D-erythritol kinase (Thermotoga petrophila (strain ATCC BAA-488 / DSM 13995 / JCM 10881 / RKU-1)).